The primary structure comprises 549 residues: ATP synthase subunit alpha (549 aa).

Residue 172–179 coordinates ATP; it reads GDRKTGKT. The tract at residues 513–549 is disordered; it reads SSTGESVVPDEHVEAMDEEDLGKESVKVKKPAPQKKK. A compositionally biased stretch (basic residues) spans 540-549; that stretch reads VKKPAPQKKK.

The protein belongs to the ATPase alpha/beta chains family. In terms of assembly, F-type ATPases have 2 components, CF(1) - the catalytic core - and CF(0) - the membrane proton channel. CF(1) has five subunits: alpha(3), beta(3), gamma(1), delta(1), epsilon(1). CF(0) has three main subunits: a(1), b(2) and c(9-12). The alpha and beta chains form an alternating ring which encloses part of the gamma chain. CF(1) is attached to CF(0) by a central stalk formed by the gamma and epsilon chains, while a peripheral stalk is formed by the delta and b chains.

The protein localises to the cell membrane. The catalysed reaction is ATP + H2O + 4 H(+)(in) = ADP + phosphate + 5 H(+)(out). Functionally, produces ATP from ADP in the presence of a proton gradient across the membrane. The alpha chain is a regulatory subunit. The polypeptide is ATP synthase subunit alpha (Mycobacterium ulcerans (strain Agy99)).